The sequence spans 105 residues: Pyrimidine/purine nucleoside phosphorylase (105 aa).

Belongs to the nucleoside phosphorylase PpnP family.

It carries out the reaction a purine D-ribonucleoside + phosphate = a purine nucleobase + alpha-D-ribose 1-phosphate. The enzyme catalyses adenosine + phosphate = alpha-D-ribose 1-phosphate + adenine. The catalysed reaction is cytidine + phosphate = cytosine + alpha-D-ribose 1-phosphate. It catalyses the reaction guanosine + phosphate = alpha-D-ribose 1-phosphate + guanine. It carries out the reaction inosine + phosphate = alpha-D-ribose 1-phosphate + hypoxanthine. The enzyme catalyses thymidine + phosphate = 2-deoxy-alpha-D-ribose 1-phosphate + thymine. The catalysed reaction is uridine + phosphate = alpha-D-ribose 1-phosphate + uracil. It catalyses the reaction xanthosine + phosphate = alpha-D-ribose 1-phosphate + xanthine. Functionally, catalyzes the phosphorolysis of diverse nucleosides, yielding D-ribose 1-phosphate and the respective free bases. Can use uridine, adenosine, guanosine, cytidine, thymidine, inosine and xanthosine as substrates. Also catalyzes the reverse reactions. The chain is Pyrimidine/purine nucleoside phosphorylase from Wolinella succinogenes (strain ATCC 29543 / DSM 1740 / CCUG 13145 / JCM 31913 / LMG 7466 / NCTC 11488 / FDC 602W) (Vibrio succinogenes).